Reading from the N-terminus, the 345-residue chain is Fructose-1,6-bisphosphatase class 1 (345 aa).

Residues E90, D109, L111, and D112 each coordinate Mg(2+). Residues 112-115 and N200 each bind substrate; that span reads DGSS. Residue E272 coordinates Mg(2+).

It belongs to the FBPase class 1 family. In terms of assembly, homotetramer. Mg(2+) is required as a cofactor.

It is found in the cytoplasm. The catalysed reaction is beta-D-fructose 1,6-bisphosphate + H2O = beta-D-fructose 6-phosphate + phosphate. It functions in the pathway carbohydrate biosynthesis; gluconeogenesis. The protein is Fructose-1,6-bisphosphatase class 1 of Bradyrhizobium diazoefficiens (strain JCM 10833 / BCRC 13528 / IAM 13628 / NBRC 14792 / USDA 110).